We begin with the raw amino-acid sequence, 77 residues long: Translation initiation factor IF-1, chloroplastic (77 aa).

The S1-like domain occupies 1-71 (MKEQKLIHEG…TKGRIIYRLR (71 aa)).

This sequence belongs to the IF-1 family. In terms of assembly, component of the 30S ribosomal translation pre-initiation complex which assembles on the 30S ribosome in the order IF-2 and IF-3, IF-1 and N-formylmethionyl-tRNA(fMet); mRNA recruitment can occur at any time during PIC assembly.

Its subcellular location is the plastid. It is found in the chloroplast. One of the essential components for the initiation of protein synthesis. Stabilizes the binding of IF-2 and IF-3 on the 30S subunit to which N-formylmethionyl-tRNA(fMet) subsequently binds. Helps modulate mRNA selection, yielding the 30S pre-initiation complex (PIC). Upon addition of the 50S ribosomal subunit IF-1, IF-2 and IF-3 are released leaving the mature 70S translation initiation complex. The polypeptide is Translation initiation factor IF-1, chloroplastic (Dioscorea elephantipes (Elephant's foot yam)).